The primary structure comprises 434 residues: Gamma-enolase (434 aa).

At Ser2 the chain carries N-acetylserine. An N6-acetyllysine modification is found at Lys5. Position 26 is a phosphothreonine (Thr26). Residue Ser40 participates in Mg(2+) binding. Phosphotyrosine is present on Tyr44. N6-acetyllysine; alternate is present on Lys60. Lys60 carries the post-translational modification N6-succinyllysine; alternate. Lys64 is modified (N6-acetyllysine). Lys89 bears the N6-acetyllysine; alternate mark. Lys89 is subject to N6-succinyllysine; alternate. The substrate site is built by His158 and Glu167. An N6-acetyllysine mark is found at Lys193, Lys197, and Lys199. Position 202 is an N6-acetyllysine; alternate (Lys202). Lys202 is covalently cross-linked (Glycyl lysine isopeptide (Lys-Gly) (interchain with G-Cter in SUMO2); alternate). Catalysis depends on Glu210, which acts as the Proton donor. N6-acetyllysine; alternate occurs at positions 228 and 233. Lys228 bears the N6-succinyllysine; alternate mark. Lys233 is subject to N6-(2-hydroxyisobutyryl)lysine; alternate. Asp245 contributes to the Mg(2+) binding site. An N6-acetyllysine modification is found at Lys256. The residue at position 263 (Ser263) is a Phosphoserine. A Phosphotyrosine modification is found at Tyr287. Residue Ser291 is modified to Phosphoserine. Residues Glu293 and Asp318 each contribute to the Mg(2+) site. Positions 293 and 318 each coordinate substrate. Lys335 and Lys343 each carry N6-acetyllysine. Lys343 acts as the Proton acceptor in catalysis. Substrate contacts are provided by residues 370 to 373 (SHRS) and Lys394. Lys406 bears the N6-acetyllysine mark.

This sequence belongs to the enolase family. As to quaternary structure, mammalian enolase is composed of 3 isozyme subunits, alpha, beta and gamma, which can form homodimers or heterodimers which are cell-type and development-specific. It depends on Mg(2+) as a cofactor. As to expression, the alpha/alpha homodimer is expressed in embryo and in most adult tissues. The alpha/beta heterodimer and the beta/beta homodimer are found in striated muscle, and the alpha/gamma heterodimer and the gamma/gamma homodimer in neurons.

It is found in the cytoplasm. The protein resides in the cell membrane. It catalyses the reaction (2R)-2-phosphoglycerate = phosphoenolpyruvate + H2O. It functions in the pathway carbohydrate degradation; glycolysis; pyruvate from D-glyceraldehyde 3-phosphate: step 4/5. Has neurotrophic and neuroprotective properties on a broad spectrum of central nervous system (CNS) neurons. Binds, in a calcium-dependent manner, to cultured neocortical neurons and promotes cell survival. This Homo sapiens (Human) protein is Gamma-enolase (ENO2).